Consider the following 383-residue polypeptide: tRNA-specific 2-thiouridylase MnmA (383 aa).

Residues 9–16 and Met35 contribute to the ATP site; that span reads GMSGGVDS. The interval 95–97 is interaction with target base in tRNA; sequence NPD. Cys100 serves as the catalytic Nucleophile. Cysteines 100 and 196 form a disulfide. Gly124 lines the ATP pocket. Positions 146–148 are interaction with tRNA; that stretch reads KDQ. Residue Cys196 is the Cysteine persulfide intermediate of the active site. An interaction with tRNA region spans residues 308 to 309; the sequence is RY.

Belongs to the MnmA/TRMU family.

It is found in the cytoplasm. The enzyme catalyses S-sulfanyl-L-cysteinyl-[protein] + uridine(34) in tRNA + AH2 + ATP = 2-thiouridine(34) in tRNA + L-cysteinyl-[protein] + A + AMP + diphosphate + H(+). Catalyzes the 2-thiolation of uridine at the wobble position (U34) of tRNA, leading to the formation of s(2)U34. In Burkholderia mallei (strain NCTC 10247), this protein is tRNA-specific 2-thiouridylase MnmA.